A 373-amino-acid polypeptide reads, in one-letter code: tRNA-specific 2-thiouridylase MnmA (373 aa).

ATP is bound by residues 12-19 (GMSGGVDS) and M38. The interval 98-100 (NPD) is interaction with target base in tRNA. C103 functions as the Nucleophile in the catalytic mechanism. C103 and C200 are disulfide-bonded. ATP is bound at residue G127. Residues 150–152 (KDQ) form an interaction with tRNA region. C200 serves as the catalytic Cysteine persulfide intermediate. Residues 312 to 313 (RY) form an interaction with tRNA region.

It belongs to the MnmA/TRMU family.

It localises to the cytoplasm. The catalysed reaction is S-sulfanyl-L-cysteinyl-[protein] + uridine(34) in tRNA + AH2 + ATP = 2-thiouridine(34) in tRNA + L-cysteinyl-[protein] + A + AMP + diphosphate + H(+). Catalyzes the 2-thiolation of uridine at the wobble position (U34) of tRNA, leading to the formation of s(2)U34. This chain is tRNA-specific 2-thiouridylase MnmA, found in Streptococcus pyogenes serotype M6 (strain ATCC BAA-946 / MGAS10394).